Here is an 88-residue protein sequence, read N- to C-terminus: Ribonuclease P protein component 1 (88 aa).

Belongs to the eukaryotic/archaeal RNase P protein component 1 family. As to quaternary structure, consists of a catalytic RNA component and at least 4-5 protein subunits.

Its subcellular location is the cytoplasm. It carries out the reaction Endonucleolytic cleavage of RNA, removing 5'-extranucleotides from tRNA precursor.. Part of ribonuclease P, a protein complex that generates mature tRNA molecules by cleaving their 5'-ends. In Nitrosopumilus maritimus (strain SCM1), this protein is Ribonuclease P protein component 1.